The primary structure comprises 191 residues: Protein Ves (191 aa).

It belongs to the Ves family.

This Citrobacter koseri (strain ATCC BAA-895 / CDC 4225-83 / SGSC4696) protein is Protein Ves.